Consider the following 862-residue polypeptide: Rab GTPase-binding effector protein 1 (862 aa).

At alanine 2 the chain carries N-acetylalanine. The stretch at aspartate 11–lysine 345 forms a coiled coil. Lysine 282 carries the post-translational modification N6-acetyllysine. The disordered stretch occupies residues glutamate 315 to alanine 338. 3 positions are modified to phosphoserine: serine 374, serine 377, and serine 407. Threonine 408 is modified (phosphothreonine). Serine 410 is modified (phosphoserine). An interaction with AP1G1, AP1G2, GGA1, GGA2 and GGA3 region spans residues aspartate 435–serine 447. A coiled-coil region spans residues aspartate 534–glutamine 816.

It belongs to the rabaptin family. Homodimer when bound to RAB5A. Heterodimer with RABGEF1. The heterodimer binds RAB4A and RAB5A that have been activated by GTP-binding. Interacts with TSC2. Interacts with GGA1 (via GAE domain), GGA2 (via GAE domain) and GGA3 (via GAE domain). Interacts with AP1G1 (via GAE domain). Interacts with AP1G2 (via GAE domain). Interacts with ECPAS. Interacts with KCNH1. Interacts with PKD1 (via C-terminal domain) and GGA1; the interactions recruit PKD1:PKD2 complex to GGA1 and ARL3 at trans-Golgi network. Proteolytic cleavage by caspases in apoptotic cells causes loss of endosome fusion activity.

It is found in the cytoplasm. The protein resides in the early endosome. The protein localises to the recycling endosome. It localises to the cytoplasmic vesicle. Its function is as follows. Rab effector protein acting as linker between gamma-adaptin, RAB4A and RAB5A. Involved in endocytic membrane fusion and membrane trafficking of recycling endosomes. Involved in KCNH1 channels trafficking to and from the cell membrane. Stimulates RABGEF1 mediated nucleotide exchange on RAB5A. Mediates the traffic of PKD1:PKD2 complex from the endoplasmic reticulum through the Golgi to the cilium. In Homo sapiens (Human), this protein is Rab GTPase-binding effector protein 1 (RABEP1).